The primary structure comprises 63 residues: MVKGTTSFGKRGRNITHIRCRRCGHHSFNVRKGYCAHCGFGRSKRIRRYSWQNKKAVTRIRLV.

The Zn(2+) site is built by cysteine 20, cysteine 23, cysteine 35, and cysteine 38. Residues 20–38 (CRRCGHHSFNVRKGYCAHC) form a C4-type zinc finger.

The protein belongs to the eukaryotic ribosomal protein eL37 family. It depends on Zn(2+) as a cofactor.

Functionally, binds to the 23S rRNA. In Thermofilum pendens (strain DSM 2475 / Hrk 5), this protein is Large ribosomal subunit protein eL37.